The sequence spans 397 residues: Enoyl-[acyl-carrier-protein] reductase [NADH] (397 aa).

NAD(+) contacts are provided by residues 48–53 (GASTGY), 74–75 (FE), 111–112 (DA), and 139–140 (LA). Substrate is bound at residue Tyr225. Tyr235 functions as the Proton donor in the catalytic mechanism. Residues Lys244 and 273–275 (VVT) each bind NAD(+).

This sequence belongs to the TER reductase family. Monomer.

It carries out the reaction a 2,3-saturated acyl-[ACP] + NAD(+) = a (2E)-enoyl-[ACP] + NADH + H(+). Its pathway is lipid metabolism; fatty acid biosynthesis. Functionally, involved in the final reduction of the elongation cycle of fatty acid synthesis (FAS II). Catalyzes the reduction of a carbon-carbon double bond in an enoyl moiety that is covalently linked to an acyl carrier protein (ACP). This chain is Enoyl-[acyl-carrier-protein] reductase [NADH], found in Edwardsiella ictaluri (strain 93-146).